The primary structure comprises 524 residues: MIKQALLSVSDKTGIVEFARELNALGVTLLSTGGTAKLLADSGLPVTEVADYTGFPEMLDGRVKTLHPKVHGGILARRDLPEHMAALAEHDIPTIDLLVVNLYPFQQTVAKDDCTLPDAIENIDIGGPTMLRSAAKNHRDVTVIVDPADYAVVLGEMRANGNSVGYDTNFRLATKVFAHTAQYDGAITNYLTSLGADKSHQARSAYPQTLNLAFDKVQEMRYGENPHQSAAFYRDLKAVDGALANYVQLQGKELSYNNIADADAAWECVKSFDAAAAAACVIIKHANPCGVALGANALEAYDKAFKTDSTSAFGGIIAFNVELDEAAAQAVAKQFVEVLIAPSFSAAARAVFAAKQNVRLLEIPLGKGINQYDFKRVGGGLLVQSPDAKNVQPSELRVVTRRHPTPKEMDDLMFAWRVAKFVKSNAIVFCGGGMTLGVGAGQMSRVDSARIASIKAQNAGLTLAGSAVASDAFFPFRDGLDVVVDAGATCVIQPGGSVRDDEVIAAADEHGIAMVLTGTRHFRH.

Positions 1–145 (MIKQALLSVS…KNHRDVTVIV (145 aa)) constitute an MGS-like domain.

This sequence belongs to the PurH family.

It catalyses the reaction (6R)-10-formyltetrahydrofolate + 5-amino-1-(5-phospho-beta-D-ribosyl)imidazole-4-carboxamide = 5-formamido-1-(5-phospho-D-ribosyl)imidazole-4-carboxamide + (6S)-5,6,7,8-tetrahydrofolate. It carries out the reaction IMP + H2O = 5-formamido-1-(5-phospho-D-ribosyl)imidazole-4-carboxamide. The protein operates within purine metabolism; IMP biosynthesis via de novo pathway; 5-formamido-1-(5-phospho-D-ribosyl)imidazole-4-carboxamide from 5-amino-1-(5-phospho-D-ribosyl)imidazole-4-carboxamide (10-formyl THF route): step 1/1. It participates in purine metabolism; IMP biosynthesis via de novo pathway; IMP from 5-formamido-1-(5-phospho-D-ribosyl)imidazole-4-carboxamide: step 1/1. In Cupriavidus taiwanensis (strain DSM 17343 / BCRC 17206 / CCUG 44338 / CIP 107171 / LMG 19424 / R1) (Ralstonia taiwanensis (strain LMG 19424)), this protein is Bifunctional purine biosynthesis protein PurH.